Here is a 264-residue protein sequence, read N- to C-terminus: Probable septum site-determining protein MinC (264 aa).

The segment at 103–147 (SHGRRPRGGNDAKDADRNDAQDAQGAPEHAQAAEAPASTSAIPPA) is disordered. The span at 110 to 122 (GGNDAKDADRNDA) shows a compositional bias: basic and acidic residues. The segment covering 124-147 (DAQGAPEHAQAAEAPASTSAIPPA) has biased composition (low complexity).

It belongs to the MinC family. Interacts with MinD and FtsZ.

Functionally, cell division inhibitor that blocks the formation of polar Z ring septums. Rapidly oscillates between the poles of the cell to destabilize FtsZ filaments that have formed before they mature into polar Z rings. Prevents FtsZ polymerization. The sequence is that of Probable septum site-determining protein MinC from Ralstonia pickettii (strain 12J).